The sequence spans 217 residues: MGAKQSSPAANGRTRAYSGSDLPSATASVNGRTAAVLRYNNSQGASGATSAASASSSAAVASQFISSRTRSVGPSARPQSGINIPNSGAYSSADSGNSTPEEPGGERERSTGAPRLVIGSLPAHLSPHLFGGFKCPVCSKFISSDEMDLHLVMCLTKPRVTYNEDVLSKDAGECAICLEELLQGDTIARLPCLCIYHKGCIDEWFEVNRSCPEHPAD.

Disordered stretches follow at residues 1–27 and 63–111; these read MGAKQSSPAANGRTRAYSGSDLPSATA and QFIS…ERST. Gly-2 carries N-myristoyl glycine lipidation. Positions 68-100 are enriched in polar residues; sequence RTRSVGPSARPQSGINIPNSGAYSSADSGNSTP. The RING-type; atypical zinc-finger motif lies at 174 to 215; the sequence is CAICLEELLQGDTIARLPCLCIYHKGCIDEWFEVNRSCPEHP.

It localises to the endosome membrane. Its subcellular location is the lysosome membrane. The protein resides in the presynaptic cell membrane. The enzyme catalyses S-ubiquitinyl-[E2 ubiquitin-conjugating enzyme]-L-cysteine + [acceptor protein]-L-lysine = [E2 ubiquitin-conjugating enzyme]-L-cysteine + N(6)-ubiquitinyl-[acceptor protein]-L-lysine.. It participates in protein modification; protein ubiquitination. May play a role in the establishment and maintenance of neuronal transmission and plasticity via its ubiquitin ligase activity. E3 ubiquitin ligases accept ubiquitin from an E2 ubiquitin-conjugating enzyme in the form of a thioester and then directly transfer the ubiquitin to targeted substrates. This Danio rerio (Zebrafish) protein is E3 ubiquitin-protein ligase znrf2 (znrf2).